Here is a 48-residue protein sequence, read N- to C-terminus: uncharacterized protein (48 aa).

It is found in the mitochondrion. This is an uncharacterized protein from Emericella nidulans (Aspergillus nidulans).